The sequence spans 199 residues: Golgi to ER traffic protein 1 (199 aa).

Residues 1–11 (MLLPDLHPYTI) lie on the Lumenal side of the membrane. A helical transmembrane segment spans residues 12 to 31 (LLSIFLVLVVKQLVATIGKS). Residues 32–115 (TIQEFVWLVY…SIDKASNALI (84 aa)) are Cytoplasmic-facing. Positions 76-116 (YAKWTKLNRQADKLSAELQKLNQEIQQQKSSIDKASNALIL) form a coiled coil. Residues 116-136 (LVLTTLPIWIARVFYRKTHLF) traverse the membrane as a helical segment. Residues 137–160 (YIRQGIFPKYVEWVLALPFLPNGA) are Lumenal-facing. The chain crosses the membrane as a helical span at residues 161 to 177 (VGLTIWMFAVNSVVSNF). Over 178-199 (SFLVSFPFAKRVSKPVRDTKVE) the chain is Cytoplasmic.

The protein belongs to the WRB/GET1 family. As to quaternary structure, component of the Golgi to ER traffic (GET) complex, which is composed of GET1, GET2 and GET3. Within the complex, GET1 and GET2 form a heterotetramer which is stabilized by phosphatidylinositol binding and which binds to the GET3 homodimer.

The protein localises to the endoplasmic reticulum membrane. It is found in the golgi apparatus membrane. In terms of biological role, required for the post-translational delivery of tail-anchored (TA) proteins to the endoplasmic reticulum. Together with GET2, acts as a membrane receptor for soluble GET3, which recognizes and selectively binds the transmembrane domain of TA proteins in the cytosol. The GET complex cooperates with the HDEL receptor ERD2 to mediate the ATP-dependent retrieval of resident ER proteins that contain a C-terminal H-D-E-L retention signal from the Golgi to the ER. This is Golgi to ER traffic protein 1 from Candida albicans (strain WO-1) (Yeast).